A 388-amino-acid chain; its full sequence is MTQFPKTVMLLGSGELGKEVAISAQRIGCHVIACDRYADAPAMQVADQAEVLAMTDTDALLATVRRHRPDVVIPEIEALAVSALAELEQDGITVIPTARATAVTMNRDRIRDLAAGELALRSARFAYAASAEELRAEAPALGWPVVVKPVMSSSGKGQSVVDGPDGLDQAWDAAMAGARGTSPRVIVEEFLRFDLEITLLTIRQHNGETLFCAPIGHEQEHGDYQCSWQPAELSSEQLHQAQAMARTVTQNLGGVGLFGVEFFLCGDEVIFSELSPRPHDTGLVTLISQNLSEFELHLRAVLGLPIPSITTADAAASRVILAQNQMDAVSYTGVDTALQEPDTQLLLFGKPTARPGRRMGVALARGEHLAEARAKADRAAACVRVLQR.

N(1)-(5-phospho-beta-D-ribosyl)glycinamide is bound by residues 15 to 16 and glutamate 75; that span reads EL. Residues arginine 107, lysine 148, 153–158, 188–191, and glutamate 196 contribute to the ATP site; these read SSGKGQ and EEFL. An ATP-grasp domain is found at 112-302; the sequence is DLAAGELALR…EFELHLRAVL (191 aa). Residues glutamate 261 and glutamate 273 each coordinate Mg(2+). N(1)-(5-phospho-beta-D-ribosyl)glycinamide is bound by residues aspartate 280, lysine 350, and 357-358; that span reads RR.

This sequence belongs to the PurK/PurT family. In terms of assembly, homodimer.

It catalyses the reaction N(1)-(5-phospho-beta-D-ribosyl)glycinamide + formate + ATP = N(2)-formyl-N(1)-(5-phospho-beta-D-ribosyl)glycinamide + ADP + phosphate + H(+). Its pathway is purine metabolism; IMP biosynthesis via de novo pathway; N(2)-formyl-N(1)-(5-phospho-D-ribosyl)glycinamide from N(1)-(5-phospho-D-ribosyl)glycinamide (formate route): step 1/1. Functionally, involved in the de novo purine biosynthesis. Catalyzes the transfer of formate to 5-phospho-ribosyl-glycinamide (GAR), producing 5-phospho-ribosyl-N-formylglycinamide (FGAR). Formate is provided by PurU via hydrolysis of 10-formyl-tetrahydrofolate. In Parasynechococcus marenigrum (strain WH8102), this protein is Formate-dependent phosphoribosylglycinamide formyltransferase.